The sequence spans 602 residues: UvrABC system protein C (602 aa).

The 78-residue stretch at 15–92 (DLPGSYQMKD…IQKYQPYYNI (78 aa)) folds into the GIY-YIG domain. Residues 197–232 (GKAKASLTAKMERAAKNLQFERAAEIRDQLHYIEQT) enclose the UVR domain.

It belongs to the UvrC family. In terms of assembly, interacts with UvrB in an incision complex.

Its subcellular location is the cytoplasm. The UvrABC repair system catalyzes the recognition and processing of DNA lesions. UvrC both incises the 5' and 3' sides of the lesion. The N-terminal half is responsible for the 3' incision and the C-terminal half is responsible for the 5' incision. In Lacticaseibacillus casei (strain BL23) (Lactobacillus casei), this protein is UvrABC system protein C.